A 92-amino-acid chain; its full sequence is Small ribosomal subunit protein uS19 (92 aa).

This sequence belongs to the universal ribosomal protein uS19 family.

Protein S19 forms a complex with S13 that binds strongly to the 16S ribosomal RNA. The protein is Small ribosomal subunit protein uS19 of Brucella anthropi (strain ATCC 49188 / DSM 6882 / CCUG 24695 / JCM 21032 / LMG 3331 / NBRC 15819 / NCTC 12168 / Alc 37) (Ochrobactrum anthropi).